The following is an 80-amino-acid chain: Inner kinetochore subunit MHF2 (80 aa).

The protein belongs to the CENP-X/MHF2 family. In terms of assembly, the MHF histone-fold complex is a heterotetramer of 2 MHF1-MHF2 heterodimers. Together with MPH1/FANCM, forms the FANCM-MHF complex. Component of the inner kinetochore constitutive centromere-associated network (CCAN) (also known as central kinetochore CTF19 complex in yeast), which is composed of at least AME1, CHL4, CNN1, CTF3, CTF19, IML3, MCM16, MCM21, MCM22, MHF1, MHF2, MIF2, NKP1, NKP2, OKP1 and WIP1.

Functionally, DNA-binding component of a FANCM-MHF complex involved in DNA damage repair and genome maintenance. FANCM-MHF promotes gene conversion at blocked replication forks, probably by reversal of the stalled fork. Component of the kinetochore, a multiprotein complex that assembles on centromeric DNA and attaches chromosomes to spindle microtubules, mediating chromosome segregation and sister chromatid segregation during meiosis and mitosis. Component of the inner kinetochore constitutive centromere-associated network (CCAN), which serves as a structural platform for outer kinetochore assembly. The sequence is that of Inner kinetochore subunit MHF2 from Saccharomyces cerevisiae (strain ATCC 204508 / S288c) (Baker's yeast).